A 409-amino-acid chain; its full sequence is Elongation factor Tu (409 aa).

A tr-type G domain is found at 10-214 (KPHVNIGTIG…EVDGYIPQPE (205 aa)). Positions 19–26 (GHVDHGKT) are G1. 19-26 (GHVDHGKT) contributes to the GTP binding site. T26 is a Mg(2+) binding site. The G2 stretch occupies residues 60–64 (GITIN). Residues 81–84 (DCPG) form a G3 region. GTP-binding positions include 81–85 (DCPGH) and 136–139 (NKQD). The segment at 136–139 (NKQD) is G4. Positions 174–176 (SAL) are G5.

The protein belongs to the TRAFAC class translation factor GTPase superfamily. Classic translation factor GTPase family. EF-Tu/EF-1A subfamily. Monomer.

The protein localises to the cytoplasm. It carries out the reaction GTP + H2O = GDP + phosphate + H(+). In terms of biological role, GTP hydrolase that promotes the GTP-dependent binding of aminoacyl-tRNA to the A-site of ribosomes during protein biosynthesis. The chain is Elongation factor Tu from Trichodesmium erythraeum (strain IMS101).